A 228-amino-acid polypeptide reads, in one-letter code: UPF0173 metal-dependent hydrolase BcerKBAB4_4442 (228 aa).

The protein belongs to the UPF0173 family.

The polypeptide is UPF0173 metal-dependent hydrolase BcerKBAB4_4442 (Bacillus mycoides (strain KBAB4) (Bacillus weihenstephanensis)).